Reading from the N-terminus, the 272-residue chain is Ras-related protein RSR1 (272 aa).

10–17 (GAGGVGKS) provides a ligand contact to GTP. The Effector region signature appears at 32–40 (YDPTIEDSY). Residues 57-61 (DTAGI) and 116-119 (NKAD) contribute to the GTP site. Residues 177–272 (DARNQSQQFS…KKNASTCTIL (96 aa)) are disordered. Composition is skewed to polar residues over residues 180–232 (NQSQ…STPV) and 245–258 (SGSS…ATSQ). Residue cysteine 269 is modified to Cysteine methyl ester. Cysteine 269 carries S-geranylgeranyl cysteine lipidation. A propeptide spans 270 to 272 (TIL) (removed in mature form).

The protein belongs to the small GTPase superfamily. Ras family.

It is found in the cell membrane. It catalyses the reaction GTP + H2O = GDP + phosphate + H(+). Its activity is regulated as follows. Alternates between an inactive form bound to GDP and an active form bound to GTP. Activated by a guanine nucleotide-exchange factor (GEF) and inactivated by a GTPase-activating protein (GAP). In terms of biological role, ras-related protein which binds GDP/GTP and possesses intrinsic GTPase activity. Involved in development of cell polarity during the cell division cycle, and essential for bud emergence. The sequence is that of Ras-related protein RSR1 from Saccharomyces cerevisiae (strain ATCC 204508 / S288c) (Baker's yeast).